The following is a 275-amino-acid chain: MAVIKCKPTSPGRRHLVKVVNSDLHKGKPFAGLLAKKSKSGGRNNTGRITVRHIGGGHKQHYRLIDFKRNKDGIPAKVERLEYDPNRTANIALVLYADGERRYILAAKGMQAGDKIQSGIDAEIKSGNAMPLRNIPVGSVVHAVEMKPGKGAQIARSAGAYVQVIARDGAYATLRLRSGEMRKVPVDCRATLGEVGNAEHMLRQLGKAGAKRWRGVRPTVRGVAMNPVDHPHGGGEGRTSGGRHPVSPWGQPTKGYKTRSNKRTDKYIVRRRNKK.

The segment at 223–275 (VAMNPVDHPHGGGEGRTSGGRHPVSPWGQPTKGYKTRSNKRTDKYIVRRRNKK) is disordered.

It belongs to the universal ribosomal protein uL2 family. In terms of assembly, part of the 50S ribosomal subunit. Forms a bridge to the 30S subunit in the 70S ribosome.

Functionally, one of the primary rRNA binding proteins. Required for association of the 30S and 50S subunits to form the 70S ribosome, for tRNA binding and peptide bond formation. It has been suggested to have peptidyltransferase activity; this is somewhat controversial. Makes several contacts with the 16S rRNA in the 70S ribosome. In Shewanella halifaxensis (strain HAW-EB4), this protein is Large ribosomal subunit protein uL2.